Here is a 310-residue protein sequence, read N- to C-terminus: Inorganic pyrophosphatase, mitochondrial (310 aa).

Residues 1-30 constitute a mitochondrion transit peptide; the sequence is MNLLRMNALTSKARSIERLKQTLNILSIRN. Asp152, Asp157, and Asp189 together coordinate Mg(2+).

The protein belongs to the PPase family. As to quaternary structure, homodimer that binds non-covalently to a protein complex in the inner mitochondrial membrane. Mg(2+) serves as cofactor.

The protein localises to the mitochondrion. It carries out the reaction diphosphate + H2O = 2 phosphate + H(+). Involved in energy production. Its activity is stimulated by uncouplers of ATP synthesis. In Saccharomyces cerevisiae (strain ATCC 204508 / S288c) (Baker's yeast), this protein is Inorganic pyrophosphatase, mitochondrial (PPA2).